The chain runs to 425 residues: High-affinity branched-chain amino acid transport system permease protein LivM (425 aa).

Transmembrane regions (helical) follow at residues isoleucine 6–valine 26, tryptophan 45–phenylalanine 65, phenylalanine 92–valine 112, isoleucine 120–leucine 140, phenylalanine 145–tryptophan 165, cysteine 167–leucine 187, glycine 191–asparagine 211, arginine 260–asparagine 280, isoleucine 311–alanine 331, isoleucine 353–valine 373, and methionine 387–proline 407.

Belongs to the binding-protein-dependent transport system permease family. LivHM subfamily.

Its subcellular location is the cell inner membrane. Part of the binding-protein-dependent transport system for branched-chain amino acids. Probably responsible for the translocation of the substrates across the membrane. This chain is High-affinity branched-chain amino acid transport system permease protein LivM (livM), found in Escherichia coli (strain K12).